A 179-amino-acid chain; its full sequence is Sodium/potassium-transporting ATPase subunit beta-1-interacting protein 3 (179 aa).

The next 4 membrane-spanning stretches (helical) occupy residues 5 to 22 (TGRC…LVAL), 35 to 55 (APIL…FGTI), 62 to 82 (IVAY…IICF), and 151 to 171 (AVQI…ISVI).

The protein belongs to the NKAIN family. In terms of assembly, interacts with atp1b1 C-terminus.

The protein resides in the cell membrane. This chain is Sodium/potassium-transporting ATPase subunit beta-1-interacting protein 3 (nkain3), found in Xenopus laevis (African clawed frog).